The sequence spans 332 residues: MQTKARLPVDINAPSLQSPALGIDTHLLRGELRQHEPMKQHVSWRAGGHAAYFYQPADLEDLAVFLHFWPKDEPVMMIGLGSNFLVRDGGLPGVMIALHAKLNDLLLVEQEEDGGLIYAGAGVPCAKLARFASLHNLAGAEFLAGIPGTVGGALAMNAGCYGSETWERVERVKTIDRDGTLHERTPEDYRIGYRQVELHEVVPPDTSCSWFVGGWFRLRPGQQESSRQAVKALLGTRIKTQPLGFPSAGSVFRNPPGDYAARLVEQCGLKGFRIGDAMISTLHANFIINCGHATATEIETVINTVQDIVYKKTEIRLVTEVRIIGQHKGNEL.

Positions 45 to 243 (RAGGHAAYFY…LGTRIKTQPL (199 aa)) constitute an FAD-binding PCMH-type domain. Arginine 194 is an active-site residue. Serine 250 (proton donor) is an active-site residue. The active site involves glutamate 320.

Belongs to the MurB family. FAD serves as cofactor.

The protein resides in the cytoplasm. It carries out the reaction UDP-N-acetyl-alpha-D-muramate + NADP(+) = UDP-N-acetyl-3-O-(1-carboxyvinyl)-alpha-D-glucosamine + NADPH + H(+). Its pathway is cell wall biogenesis; peptidoglycan biosynthesis. Cell wall formation. The chain is UDP-N-acetylenolpyruvoylglucosamine reductase from Nitrosomonas eutropha (strain DSM 101675 / C91 / Nm57).